Consider the following 720-residue polypeptide: Nucleolar protein 11 (720 aa).

The disordered stretch occupies residues 365 to 392 (KDPETKPSNAGAQKKTRERKTNANAGNG).

It is found in the nucleus. It localises to the nucleolus. Ribosome biogenesis factor. May be required for both optimal rDNA transcription and pre-rRNA processing. This is Nucleolar protein 11 (nol11) from Xenopus laevis (African clawed frog).